We begin with the raw amino-acid sequence, 652 residues long: MADSEGTESGDGTEAAERAGGWFLVEAVVDRTTGYQVSSDEEDNSIDTGEDLVDFIDTRRPGDGQEVPLALFVQQNAQDDAATVQALKRKYTCSPASSTCVSLVDSELSPRLDAIRIHRGQDRARRRLFEQDSGYGHTQVEIGASESQVPGDAQHEGGGESVQEAEEERGGGDGEAEATGNQETQAQEQAADILEVFKVSNLKAKLLYKFKDLFGLAFGELVRNFKSDKSICGDWVICAFGVYHAVAEAVKTLIQPICVYAHIQIQTCQWGMVILMLVRYKCGKSRETVAHSMGKLLNIPERQMLIEPPKIRSAPCALYWYRTAMGNASEVYGETPEWIVRQTVVGHAMQEAQFSLSMLVQWAYDNDITDESVLAYEYALLGNEDPNAAAFLASNCQAKYIKDAITMCKHYRRAEQAKMTMAQWITHRGRKVADTGDWKAIVKYLRYQQVEFVPFISALKLFLKGVPKKSCMVFYGPSDTGKSLFCMSLLNFLGGAVISYVNSSSHFWLSPLADTKVGLLDDATYQCWQYIDTYLRTVLDGNAISIDRKHRNLTQLKCPPLMITTNINPLEDPTFKYLHSRIVVFQFLHKCPLNSNGDPVYTLNNENWKSFFRRSWARIEGSDQQEEEEEEDEDGVTSRPFRCVPGEITRPL.

The Nuclear localization signal signature appears at K88–K90. 3 positions are modified to phosphoserine; by host: S94, S98, and S109. Residues L108–I117 carry the Nuclear export signal motif. The disordered stretch occupies residues S145–Q185. Residues Q185–E351 are DNA-binding region. One can recognise an SF3 helicase domain in the interval V450–V600. Residue G476–S483 coordinates ATP. K557 is covalently cross-linked (Glycyl lysine isopeptide (Lys-Gly) (interchain with G-Cter in SUMO)). The segment at E620–L652 is disordered. A compositionally biased stretch (acidic residues) spans D623–G635.

The protein belongs to the papillomaviridae E1 protein family. Can form hexamers. Interacts with E2 protein; this interaction increases E1 DNA binding specificity. Interacts with host DNA polymerase subunit POLA2. Interacts with host single stranded DNA-binding protein RPA1. Interacts with host TOP1; this interaction stimulates the enzymatic activity of TOP1. In terms of processing, phosphorylated. Sumoylated.

The protein resides in the host nucleus. It carries out the reaction Couples ATP hydrolysis with the unwinding of duplex DNA by translocating in the 3'-5' direction.. The enzyme catalyses ATP + H2O = ADP + phosphate + H(+). ATP-dependent DNA 3'-5' helicase required for initiation of viral DNA replication. It forms a complex with the viral E2 protein. The E1-E2 complex binds to the replication origin which contains binding sites for both proteins. During the initial step, a dimer of E1 interacts with a dimer of protein E2 leading to a complex that binds the viral origin of replication with high specificity. Then, a second dimer of E1 displaces the E2 dimer in an ATP-dependent manner to form the E1 tetramer. Following this, two E1 monomers are added to each half of the site, which results in the formation of two E1 trimers on the viral ori. Subsequently, two hexamers will be created. The double hexamer acts as a bi-directional helicase machinery and unwinds the viral DNA and then recruits the host DNA polymerase to start replication. This chain is Replication protein E1, found in Human papillomavirus type 61.